The primary structure comprises 300 residues: Sulfate adenylyltransferase subunit 2 (300 aa).

Residues 281-300 are disordered; that stretch reads RAIDRDEAGSMEKKKREGYF.

Belongs to the PAPS reductase family. CysD subfamily. As to quaternary structure, heterodimer composed of CysD, the smaller subunit, and CysN.

The catalysed reaction is sulfate + ATP + H(+) = adenosine 5'-phosphosulfate + diphosphate. The protein operates within sulfur metabolism; hydrogen sulfide biosynthesis; sulfite from sulfate: step 1/3. Its function is as follows. With CysN forms the ATP sulfurylase (ATPS) that catalyzes the adenylation of sulfate producing adenosine 5'-phosphosulfate (APS) and diphosphate, the first enzymatic step in sulfur assimilation pathway. APS synthesis involves the formation of a high-energy phosphoric-sulfuric acid anhydride bond driven by GTP hydrolysis by CysN coupled to ATP hydrolysis by CysD. This chain is Sulfate adenylyltransferase subunit 2, found in Brucella canis (strain ATCC 23365 / NCTC 10854 / RM-666).